We begin with the raw amino-acid sequence, 497 residues long: Bifunctional protein GlmU (497 aa).

The interval 1 to 241 (MSPETIGPAA…RWQVEGANDR (241 aa)) is pyrophosphorylase. UDP-N-acetyl-alpha-D-glucosamine is bound by residues 14–17 (LAAG), lysine 28, glutamine 81, 86–87 (GT), 112–114 (YGD), glycine 151, glutamate 166, asparagine 181, and asparagine 239. Aspartate 114 serves as a coordination point for Mg(2+). Asparagine 239 is a Mg(2+) binding site. The linker stretch occupies residues 242–262 (IQLSALAAEHNRRIIESWMRA). Positions 263 to 497 (GVTVVDPATT…QATIEEGKQA (235 aa)) are N-acetyltransferase. Arginine 344 and lysine 362 together coordinate UDP-N-acetyl-alpha-D-glucosamine. Histidine 374 functions as the Proton acceptor in the catalytic mechanism. The UDP-N-acetyl-alpha-D-glucosamine site is built by tyrosine 377 and asparagine 388. Residues 397–398 (NY), serine 416, and alanine 434 each bind acetyl-CoA.

In the N-terminal section; belongs to the N-acetylglucosamine-1-phosphate uridyltransferase family. The protein in the C-terminal section; belongs to the transferase hexapeptide repeat family. Homotrimer. The cofactor is Mg(2+).

The protein resides in the cytoplasm. It catalyses the reaction alpha-D-glucosamine 1-phosphate + acetyl-CoA = N-acetyl-alpha-D-glucosamine 1-phosphate + CoA + H(+). The enzyme catalyses N-acetyl-alpha-D-glucosamine 1-phosphate + UTP + H(+) = UDP-N-acetyl-alpha-D-glucosamine + diphosphate. It functions in the pathway nucleotide-sugar biosynthesis; UDP-N-acetyl-alpha-D-glucosamine biosynthesis; N-acetyl-alpha-D-glucosamine 1-phosphate from alpha-D-glucosamine 6-phosphate (route II): step 2/2. The protein operates within nucleotide-sugar biosynthesis; UDP-N-acetyl-alpha-D-glucosamine biosynthesis; UDP-N-acetyl-alpha-D-glucosamine from N-acetyl-alpha-D-glucosamine 1-phosphate: step 1/1. It participates in bacterial outer membrane biogenesis; LPS lipid A biosynthesis. Catalyzes the last two sequential reactions in the de novo biosynthetic pathway for UDP-N-acetylglucosamine (UDP-GlcNAc). The C-terminal domain catalyzes the transfer of acetyl group from acetyl coenzyme A to glucosamine-1-phosphate (GlcN-1-P) to produce N-acetylglucosamine-1-phosphate (GlcNAc-1-P), which is converted into UDP-GlcNAc by the transfer of uridine 5-monophosphate (from uridine 5-triphosphate), a reaction catalyzed by the N-terminal domain. The sequence is that of Bifunctional protein GlmU from Paenarthrobacter aurescens (strain TC1).